We begin with the raw amino-acid sequence, 369 residues long: Ubiquitin-conjugating enzyme E2 Q2 (369 aa).

The segment at Asp-117 to Glu-143 is disordered. Positions Val-131–Glu-143 are enriched in acidic residues. One can recognise a UBC core domain in the interval Gln-198–Tyr-362. Cys-298 functions as the Glycyl thioester intermediate in the catalytic mechanism.

This sequence belongs to the ubiquitin-conjugating enzyme family. In terms of processing, auto-ubiquitinated in vitro. As to expression, detected at embryo implantation sites in the luminal epithelium of pregnant endometrium. Detected at low levels in ovary and liver.

It is found in the cytoplasm. The enzyme catalyses S-ubiquitinyl-[E1 ubiquitin-activating enzyme]-L-cysteine + [E2 ubiquitin-conjugating enzyme]-L-cysteine = [E1 ubiquitin-activating enzyme]-L-cysteine + S-ubiquitinyl-[E2 ubiquitin-conjugating enzyme]-L-cysteine.. Its pathway is protein modification; protein ubiquitination. In terms of biological role, accepts ubiquitin from the E1 complex and catalyzes its covalent attachment to other proteins. In vitro catalyzes 'Lys-48'-linked polyubiquitination. In Oryctolagus cuniculus (Rabbit), this protein is Ubiquitin-conjugating enzyme E2 Q2 (UBE2Q2).